The chain runs to 465 residues: Deoxyguanosinetriphosphate triphosphohydrolase-like protein (465 aa).

Positions 1–22 (MKWDKLLNDKRRRESGVTRSKN) are disordered. The HD domain maps to 63 to 252 (RLTHSMEVST…LEVADDIAYL (190 aa)).

The protein belongs to the dGTPase family. Type 3 subfamily.

The sequence is that of Deoxyguanosinetriphosphate triphosphohydrolase-like protein from Listeria monocytogenes serovar 1/2a (strain ATCC BAA-679 / EGD-e).